An 879-amino-acid chain; its full sequence is Phosphoenolpyruvate carboxylase (879 aa).

Residues H141 and K546 contribute to the active site.

The protein belongs to the PEPCase type 1 family. Requires Mg(2+) as cofactor.

It catalyses the reaction oxaloacetate + phosphate = phosphoenolpyruvate + hydrogencarbonate. Its function is as follows. Forms oxaloacetate, a four-carbon dicarboxylic acid source for the tricarboxylic acid cycle. This chain is Phosphoenolpyruvate carboxylase, found in Stutzerimonas stutzeri (strain A1501) (Pseudomonas stutzeri).